The chain runs to 136 residues: TBK1 inhibitor DP96R (136 aa).

Residues 66 to 86 (NNALEKPAGANNIPEKSAGRM) are disordered.

This sequence belongs to the asfivirus DP96R family.

Its function is as follows. Inhibits cGAS-STING-mediated type I IFN expression and NF-kB activation by inhibiting TBK1 and IKBKB/IKKB. Inhibits host TBK1 phosphorylation. This Ornithodoros (relapsing fever ticks) protein is TBK1 inhibitor DP96R.